The following is a 299-amino-acid chain: Taste receptor type 2 member 1 (299 aa).

Residues 1–9 (MLESHLIIY) lie on the Extracellular side of the membrane. Residues 10–30 (FLLAVIQFLLGIFTNGIIVVV) traverse the membrane as a helical segment. Residues 31 to 55 (NGIDLIKHRKMAPLDLLLSCLAVSR) lie on the Cytoplasmic side of the membrane. A helical transmembrane segment spans residues 56-76 (IFLQLFIFYVNVIVIFFIEFI). Over 77 to 81 (MCSAN) the chain is Extracellular. The chain crosses the membrane as a helical span at residues 82–102 (CAILLFVNELELWLATWLGVF). Topologically, residues 103 to 124 (YCAKVASVRHPLFIWLKMRISK) are cytoplasmic. A helical membrane pass occupies residues 125 to 145 (LVPWMILGSLLYVSMICVFHS). The Extracellular segment spans residues 146 to 178 (KYAGFMVPHFLRNFFSQNATIQKEDTLAIQIFS). N163 carries an N-linked (GlcNAc...) asparagine glycan. A helical membrane pass occupies residues 179–199 (FVAEFSVPLLIFLVAVLLLIF). Residues 200-222 (SLGRHTRQMRNTVAGSRVPGRGA) lie on the Cytoplasmic side of the membrane. Residues 223 to 243 (PISALLSILSFLILYFSHCMI) form a helical membrane-spanning segment. Topologically, residues 244–257 (KVFLSSLKFHVRRF) are extracellular. Residues 258–278 (IFLFFILVIGIYPSGHSLILI) traverse the membrane as a helical segment. The Cytoplasmic segment spans residues 279–299 (LGNPKLKQNAKKFLLHSKCCQ).

It belongs to the G-protein coupled receptor T2R family.

It is found in the membrane. Its function is as follows. Receptor that may play a role in the perception of bitterness and is gustducin-linked. May play a role in sensing the chemical composition of the gastrointestinal content. The activity of this receptor may stimulate alpha gustducin, mediate PLC-beta-2 activation and lead to the gating of TRPM5. This Pan paniscus (Pygmy chimpanzee) protein is Taste receptor type 2 member 1 (TAS2R1).